The primary structure comprises 402 residues: uncharacterized protein (402 aa).

The signal sequence occupies residues 1–44 (MLEKNLLPEILLAIHMPLNKGLTRVKAIVIIIVVIIAVIAGVVG). The disordered stretch occupies residues 53-79 (NSVTTSSSSTTTSSSLSSTSISSSTTN).

Belongs to the bacterial solute-binding protein 1 family. WtpA subfamily.

This is an uncharacterized protein from Saccharolobus solfataricus (strain ATCC 35092 / DSM 1617 / JCM 11322 / P2) (Sulfolobus solfataricus).